The sequence spans 207 residues: Ras-related protein Rab-7a (207 aa).

N-acetylthreonine is present on Thr2. Residues Ser17, Gly18, Val19, Gly20, Lys21, Thr22, Ser23, Ser34, Asn35, Tyr37, and Thr40 each contribute to the GTP site. A Mg(2+)-binding site is contributed by Thr22. Residues 28–41 (YVNKKFSNQYKATI) carry the Switch 1 motif. 2 residues coordinate Mg(2+): Thr40 and Asp63. Gly66 provides a ligand contact to GTP. The Switch 2 motif lies at 67–82 (QERFQSLGVAFYRGAD). Ser72 carries the post-translational modification Phosphoserine. The GTP site is built by Asn125, Lys126, Asp128, Ala156, and Lys157. Residues Lys191 and Lys194 each participate in a glycyl lysine isopeptide (Lys-Gly) (interchain with G-Cter in ubiquitin) cross-link. 2 S-geranylgeranyl cysteine lipidation sites follow: Cys205 and Cys207. Cys207 carries the post-translational modification Cysteine methyl ester.

The protein belongs to the small GTPase superfamily. Rab family. As to quaternary structure, interacts with NTRK1/TRKA. Interacts with RILP. Interacts with PSMA7. Interacts with RNF115. Interacts with FYCO1. Interacts with the PIK3C3/VPS34-PIK3R4 complex. The GTP-bound form interacts with OSBPL1A. The GTP-bound form interacts with RAC1. Interacts with CLN3. Interacts with CHM, the substrate-binding subunit of the Rab geranylgeranyltransferase complex. Interacts with C9orf72. Does not interact with HPS4 and the BLOC-3 complex (heterodimer of HPS1 and HPS4). Interacts with CLN5. Interacts with PLEKHM1 (via N- and C-terminus). Interacts with PRPH; the interaction is direct. Interacts with VPS13A. The GDP-bound form interacts with RIMOC1. Interacts with the MON1A-CCZ1B complex and this interaction is enhanced in the presence of RIMOC1. Interacts with VPS39 and VPS41. Forms a ternary complex with LAMP2 and RUFY4; the interaction with LAMP2 is mediated by RUFY4 (via RUN and coiled coil domains). Mg(2+) serves as cofactor. Deubiquitination at Lys-191 and Lys-194 by USP32. In terms of processing, phosphorylated at Ser-72 by LRRK1; phosphorylation is dependent on protein kinase C (PKC) activation of LRRK1. Post-translationally, prenylated. Prenylation is required for association with cellular membranes.

Its subcellular location is the cytoplasmic vesicle. It localises to the phagosome membrane. The protein localises to the late endosome membrane. The protein resides in the lysosome membrane. It is found in the melanosome membrane. Its subcellular location is the autophagosome membrane. It localises to the lipid droplet. The protein localises to the endosome membrane. The protein resides in the mitochondrion membrane. The catalysed reaction is GTP + H2O = GDP + phosphate + H(+). Its activity is regulated as follows. Regulated by guanine nucleotide exchange factors (GEFs) which promote the exchange of bound GDP for free GTP. Regulated by GTPase activating proteins (GAPs) which increase the GTP hydrolysis activity. Inhibited by GDP dissociation inhibitors (GDIs). Functionally, the small GTPases Rab are key regulators of intracellular membrane trafficking, from the formation of transport vesicles to their fusion with membranes. Rabs cycle between an inactive GDP-bound form and an active GTP-bound form that is able to recruit to membranes different sets of downstream effectors directly responsible for vesicle formation, movement, tethering and fusion. In its active state, RAB7A binds to a variety of effector proteins playing a key role in the regulation of endo-lysosomal trafficking. Governs early-to-late endosomal maturation, microtubule minus-end as well as plus-end directed endosomal migration and positioning, and endosome-lysosome transport through different protein-protein interaction cascades. Also plays a central role in growth-factor-mediated cell signaling, nutrient-transporter-mediated nutrient uptake, neurotrophin transport in the axons of neurons and lipid metabolism. Also involved in regulation of some specialized endosomal membrane trafficking, such as maturation of melanosomes, pathogen-induced phagosomes (or vacuoles) and autophagosomes. Plays a role in the maturation and acidification of phagosomes that engulf pathogens, such as S.aureus and Mycobacteria. Plays a role in the fusion of phagosomes with lysosomes. In concert with RAC1, plays a role in regulating the formation of RBs (ruffled borders) in osteoclasts. Controls the endosomal trafficking and neurite outgrowth signaling of NTRK1/TRKA. Regulates the endocytic trafficking of the EGF-EGFR complex by regulating its lysosomal degradation. Involved in the ADRB2-stimulated lipolysis through lipophagy, a cytosolic lipase-independent autophagic pathway. Required for the exosomal release of SDCBP, CD63 and syndecan. Required for vesicular trafficking and cell surface expression of ACE2. May play a role in PRPH neuronal intermediate filament assembly. The protein is Ras-related protein Rab-7a (RAB7A) of Canis lupus familiaris (Dog).